The following is a 267-amino-acid chain: NAD kinase 2 (267 aa).

The Proton acceptor role is filled by D52. Residues 52–53, 124–125, R151, D153, 164–169, and A188 contribute to the NAD(+) site; these read DG, NE, and TAYNKS.

Belongs to the NAD kinase family. The cofactor is a divalent metal cation.

The protein resides in the cytoplasm. It carries out the reaction NAD(+) + ATP = ADP + NADP(+) + H(+). Involved in the regulation of the intracellular balance of NAD and NADP, and is a key enzyme in the biosynthesis of NADP. Catalyzes specifically the phosphorylation on 2'-hydroxyl of the adenosine moiety of NAD to yield NADP. This is NAD kinase 2 from Bacillus subtilis (strain 168).